A 321-amino-acid polypeptide reads, in one-letter code: Phospho-N-acetylmuramoyl-pentapeptide-transferase (321 aa).

10 helical membrane-spanning segments follow: residues 6 to 26 (IFIPIVVSFAITVSVMPLFIG), 54 to 74 (MGGVVFLVASLITSLAMGLFF), 77 to 97 (FTPSLLIILFILVLYGLLGYL), 117 to 137 (LIGQIFGGLVFYFVYRSEGFS), 143 to 163 (FGVAEVPLGIFYGVFIIFWLV), 175 to 195 (IDGLVAGLGTISFGTYAIIAW), 200 to 220 (FDVVIICLSVIGGLIGFFPYN), 226 to 246 (IFMGDVGSLALGGLLAAISII), 251 to 271 (WTLLLIGLVYVCETASVILQV), and 301 to 321 (IDFVFWSVGLICSGITLWILF).

Belongs to the glycosyltransferase 4 family. MraY subfamily. The cofactor is Mg(2+).

The protein localises to the cell membrane. It catalyses the reaction UDP-N-acetyl-alpha-D-muramoyl-L-alanyl-gamma-D-glutamyl-L-lysyl-D-alanyl-D-alanine + di-trans,octa-cis-undecaprenyl phosphate = Mur2Ac(oyl-L-Ala-gamma-D-Glu-L-Lys-D-Ala-D-Ala)-di-trans,octa-cis-undecaprenyl diphosphate + UMP. It participates in cell wall biogenesis; peptidoglycan biosynthesis. In terms of biological role, catalyzes the initial step of the lipid cycle reactions in the biosynthesis of the cell wall peptidoglycan: transfers peptidoglycan precursor phospho-MurNAc-pentapeptide from UDP-MurNAc-pentapeptide onto the lipid carrier undecaprenyl phosphate, yielding undecaprenyl-pyrophosphoryl-MurNAc-pentapeptide, known as lipid I. This is Phospho-N-acetylmuramoyl-pentapeptide-transferase from Enterococcus faecalis (strain ATCC 700802 / V583).